The primary structure comprises 462 residues: Prenyltransferase phqI (462 aa).

Brevianamide F is bound at residue E101. Dimethylallyl diphosphate-binding residues include R117, K204, Y206, K273, Y275, Y357, Y442, and Y446.

Belongs to the tryptophan dimethylallyltransferase family.

It functions in the pathway alkaloid biosynthesis. Its function is as follows. Prenyltransferase; part of the gene cluster that mediates the biosynthesis of paraherquamide, a fungal indole alkaloid that belongs to a family of natural products containing a characteristic bicyclo[2.2.2]diazaoctane core. The first steps in the biosynthesis of paraherquamide is the production of the beta-methyl-proline precursor from L-isoleucine. They require oxidation of a terminally hydroxylated L-isoleucine to the corresponding aldehyde by enzymes which have still to be identified. Spontaneous cyclization and dehydration would yield the 4-methyl pyrolline-5-carboxylic acid, which is then reduced by the pyrroline-5-carboxylate reductase phqD leading to the beta-methyl-proline precursor. The next step of paraherquamide biosynthesis involves coupling of beta-methyl-proline and L-tryptophan by the bimodular NRPS phqB, to produce a monooxopiperazine intermediate. The reductase (R) domain of phqB utilizes NADPH for hydride transfer to reduce the thioester bond of the T domain-tethered linear dipeptide to a hemithioaminal intermediate, which spontaneously cleaves the C-S bond to release the aldehyde product. This compound undergoes spontaneous cyclization and dehydration to give a dienamine which is reverse prenylated at C-2 by the reverse prenyltransferase phqJ. The other prenyltransferase present in the cluster, phqI may be a redundant gene in the pathway. During biosynthetic assembly, the key step to produce the polycyclic core is catalyzed by the bifunctional reductase and intramolecular [4+2] Diels-Alderase, phqE, resulting in formation of the [2.2.2] diazaoctane intermediate preparaherquamide. Following formation of preparaherquamide, an indole 2,3-epoxidation-initiated pinacol-like rearrangement is catalyzed by the phqK FAD-dependent monooxygenase. The prenyltransferase phqA, the cytochrome P450 monooxygenase phqL, and the FAD-linked oxidoreductase phqH (or the cytochrome P450 monooxygenase phqM), are proposed to be involved in the formation of the pyran ring. The FAD-dependent monooxygenase phqK is likely responsible for generation of the spiro-oxindole, and the N-methylation is likely mediated by the phqN methyltransferase leading to the isolable natural product paraherquamide F. However, the order of these biosynthetic steps has still to be determined. In late-stage paraherquamide biosynthesis, the third P450 monooxygenase, phqO, is probably responsible for the C-14 hydroxylation, transforming paraherquamide F to paraherquamide G, and paraherquamide E to the final product paraherquamide A. The expansion from the 6-membered ring pyran (in paraherquamides F and G) to the 7-membered dioxepin ring (in paraherquamides A and E) represents a poorly understood but intriguing process that probably involves the 2-oxoglutarate-dependent dioxygenase phqC. Finally, the remaining members of the paraherquamide cluster, including phqI as well as phqM (or phqH), do not have a clearly prescribed role and appear to be redundant. The chain is Prenyltransferase phqI from Penicillium fellutanum.